The following is a 385-amino-acid chain: Aliphatic amidase expression-regulating protein (385 aa).

In terms of assembly, homodimer. Forms a complex with AmiR.

Negatively regulates the expression of the aliphatic amidase operon. AmiC functions by inhibiting the action of AmiR at the protein level. It exhibits protein kinase activity. This chain is Aliphatic amidase expression-regulating protein (amiC), found in Pseudomonas aeruginosa (strain ATCC 15692 / DSM 22644 / CIP 104116 / JCM 14847 / LMG 12228 / 1C / PRS 101 / PAO1).